Reading from the N-terminus, the 1167-residue chain is DNA-directed RNA polymerase subunit beta (1167 aa).

It belongs to the RNA polymerase beta chain family. As to quaternary structure, the RNAP catalytic core consists of 2 alpha, 1 beta, 1 beta' and 1 omega subunit. When a sigma factor is associated with the core the holoenzyme is formed, which can initiate transcription.

The catalysed reaction is RNA(n) + a ribonucleoside 5'-triphosphate = RNA(n+1) + diphosphate. In terms of biological role, DNA-dependent RNA polymerase catalyzes the transcription of DNA into RNA using the four ribonucleoside triphosphates as substrates. The chain is DNA-directed RNA polymerase subunit beta from Mycolicibacterium vanbaalenii (strain DSM 7251 / JCM 13017 / BCRC 16820 / KCTC 9966 / NRRL B-24157 / PYR-1) (Mycobacterium vanbaalenii).